Here is a 539-residue protein sequence, read N- to C-terminus: Beta-apo-4'-carotenal oxygenase (539 aa).

Catalysis depends on residues glutamate 228 and cysteine 262.

Belongs to the aldehyde dehydrogenase family.

It catalyses the reaction 4'-apo-beta-carotenal + NAD(+) + H2O = neurosporaxanthin + NADH + 2 H(+). In terms of biological role, beta-apo-4'-carotenal oxygenase involved in the last step of synthesis of neurosporaxanthin, a carboxylic apocarotenoid acting as an essential protective pigments and leading to orange pigmentation. Converts the aldehyde beta-apo-4'-carotenal into neurosporaxanthin. Is also able to use shorter apocarotenals as substrates (such as beta-apo-8'-carotenal (C30), beta-apo-10'-carotenal (C27), or the acyclic apocarotenal apo-8'-lycopenal (C30)), indicating wide substrate specificity. Neurosporaxanthin is synthesized from geranyl-geranyl pyrophosphate (GGPP) through several enzymatic activities. Phytoene synthase activity performed by the bifunctional enzyme carAR first produces phytoene from geranyl-geranyl pyrophosphate (GGPP). The phytoene dehydrogenase carB then introduces 4 desaturations to lead to lycopene which is substrate of the carotene cyclase activity of carAR that leads to the production of gamma-carotene. CarB then performs a 5th desaturation reaction to yield torulene. Torulene is the substrate of the dioxidase carT that breaks the molecule, removing five carbon atoms to yield beta-apo-4'-carotenal, whereas the aldehyde dehydrogenase carD mediates the last step by converting beta-apo-4'-carotenal into neurosporaxanthin. In Gibberella fujikuroi (strain CBS 195.34 / IMI 58289 / NRRL A-6831) (Bakanae and foot rot disease fungus), this protein is Beta-apo-4'-carotenal oxygenase.